Reading from the N-terminus, the 184-residue chain is ATP synthase subunit b, chloroplastic (184 aa).

Residues 27–49 traverse the membrane as a helical segment; it reads LATNLINLSVVLGVLIFFGKGVL.

The protein belongs to the ATPase B chain family. In terms of assembly, F-type ATPases have 2 components, F(1) - the catalytic core - and F(0) - the membrane proton channel. F(1) has five subunits: alpha(3), beta(3), gamma(1), delta(1), epsilon(1). F(0) has four main subunits: a(1), b(1), b'(1) and c(10-14). The alpha and beta chains form an alternating ring which encloses part of the gamma chain. F(1) is attached to F(0) by a central stalk formed by the gamma and epsilon chains, while a peripheral stalk is formed by the delta, b and b' chains.

The protein resides in the plastid. Its subcellular location is the chloroplast thylakoid membrane. F(1)F(0) ATP synthase produces ATP from ADP in the presence of a proton or sodium gradient. F-type ATPases consist of two structural domains, F(1) containing the extramembraneous catalytic core and F(0) containing the membrane proton channel, linked together by a central stalk and a peripheral stalk. During catalysis, ATP synthesis in the catalytic domain of F(1) is coupled via a rotary mechanism of the central stalk subunits to proton translocation. Its function is as follows. Component of the F(0) channel, it forms part of the peripheral stalk, linking F(1) to F(0). The sequence is that of ATP synthase subunit b, chloroplastic from Spinacia oleracea (Spinach).